A 446-amino-acid chain; its full sequence is T-box transcription factor TBX19 (446 aa).

Positions 43 to 216 (LEDAPLWQRF…YNPFAKAFLD (174 aa)) form a DNA-binding region, T-box.

It is found in the nucleus. Its function is as follows. Transcriptional regulator involved in developmental processes. Can activate POMC gene expression and repress the alpha glycoprotein subunit and thyroid-stimulating hormone beta promoters. The protein is T-box transcription factor TBX19 of Mus musculus (Mouse).